The chain runs to 496 residues: Angiopoietin-2 (496 aa).

Positions 1–18 (MWQIIFLTFGWDLVLASA) are cleaved as a signal peptide. N-linked (GlcNAc...) asparagine glycans are attached at residues asparagine 89, asparagine 119, asparagine 133, asparagine 151, asparagine 240, and asparagine 304. Residues 159-256 (QLLQHSISTN…QQHDLMETVN (98 aa)) are a coiled coil. In terms of domain architecture, Fibrinogen C-terminal spans 275-495 (KEEQTTFRDC…ATTMMIRPAD (221 aa)). Cysteine 284 and cysteine 313 are disulfide-bonded. Residues aspartate 429, aspartate 431, cysteine 433, and cysteine 435 each contribute to the Ca(2+) site. Disulfide bonds link cysteine 433-cysteine 435 and cysteine 437-cysteine 450.

Interacts with TEK/TIE2, competing for the same binding site as ANGPT1. Interacts with ITGA5. Interacts with SVEP1/polydom. Interacts with THBD; this interaction significantly inhibits the generation of activated PC and TAFIa/CPB2 by the thrombin/thrombomodulin complex. In terms of tissue distribution, expressed in the ovary, uterus and placenta.

Its subcellular location is the secreted. Its function is as follows. Binds to TEK/TIE2, competing for the ANGPT1 binding site, and modulating ANGPT1 signaling. Can induce tyrosine phosphorylation of TEK/TIE2 in the absence of ANGPT1. In the absence of angiogenic inducers, such as VEGF, ANGPT2-mediated loosening of cell-matrix contacts may induce endothelial cell apoptosis with consequent vascular regression. In concert with VEGF, it may facilitate endothelial cell migration and proliferation, thus serving as a permissive angiogenic signal. Involved in the regulation of lymphangiogenesis. The chain is Angiopoietin-2 (Angpt2) from Mus musculus (Mouse).